We begin with the raw amino-acid sequence, 119 residues long: Ribonuclease P protein component (119 aa).

It belongs to the RnpA family. As to quaternary structure, consists of a catalytic RNA component (M1 or rnpB) and a protein subunit.

The catalysed reaction is Endonucleolytic cleavage of RNA, removing 5'-extranucleotides from tRNA precursor.. In terms of biological role, RNaseP catalyzes the removal of the 5'-leader sequence from pre-tRNA to produce the mature 5'-terminus. It can also cleave other RNA substrates such as 4.5S RNA. The protein component plays an auxiliary but essential role in vivo by binding to the 5'-leader sequence and broadening the substrate specificity of the ribozyme. This chain is Ribonuclease P protein component, found in Cronobacter sakazakii (strain ATCC BAA-894) (Enterobacter sakazakii).